The following is a 150-amino-acid chain: 3-hydroxyacyl-[acyl-carrier-protein] dehydratase FabZ (150 aa).

The active site involves His-57.

This sequence belongs to the thioester dehydratase family. FabZ subfamily.

It is found in the cytoplasm. It carries out the reaction a (3R)-hydroxyacyl-[ACP] = a (2E)-enoyl-[ACP] + H2O. In terms of biological role, involved in unsaturated fatty acids biosynthesis. Catalyzes the dehydration of short chain beta-hydroxyacyl-ACPs and long chain saturated and unsaturated beta-hydroxyacyl-ACPs. This chain is 3-hydroxyacyl-[acyl-carrier-protein] dehydratase FabZ, found in Actinobacillus succinogenes (strain ATCC 55618 / DSM 22257 / CCUG 43843 / 130Z).